A 229-amino-acid chain; its full sequence is Urease accessory protein UreF (229 aa).

This sequence belongs to the UreF family. In terms of assembly, ureD, UreF and UreG form a complex that acts as a GTP-hydrolysis-dependent molecular chaperone, activating the urease apoprotein by helping to assemble the nickel containing metallocenter of UreC. The UreE protein probably delivers the nickel.

Its subcellular location is the cytoplasm. In terms of biological role, required for maturation of urease via the functional incorporation of the urease nickel metallocenter. The chain is Urease accessory protein UreF from Staphylococcus saprophyticus subsp. saprophyticus (strain ATCC 15305 / DSM 20229 / NCIMB 8711 / NCTC 7292 / S-41).